We begin with the raw amino-acid sequence, 241 residues long: Orotidine 5'-phosphate decarboxylase (241 aa).

Substrate is bound by residues Asp-18, Lys-39, 66 to 75, Thr-130, Arg-192, Gln-201, Gly-221, and Arg-222; that span reads DLKFHDIPAT. The active-site Proton donor is Lys-68.

This sequence belongs to the OMP decarboxylase family. Type 1 subfamily. In terms of assembly, homodimer.

The enzyme catalyses orotidine 5'-phosphate + H(+) = UMP + CO2. It functions in the pathway pyrimidine metabolism; UMP biosynthesis via de novo pathway; UMP from orotate: step 2/2. In terms of biological role, catalyzes the decarboxylation of orotidine 5'-monophosphate (OMP) to uridine 5'-monophosphate (UMP). This Synechococcus sp. (strain CC9605) protein is Orotidine 5'-phosphate decarboxylase.